Reading from the N-terminus, the 223-residue chain is Ubiquinone biosynthesis protein COQ4 homolog 2, mitochondrial (223 aa).

The N-terminal 26 residues, 1 to 26, are a transit peptide targeting the mitochondrion; it reads MFLRRVHPVRLGHAIQRSLTTTKSRN. The segment covering 21-32 has biased composition (low complexity); it reads TTKSRNESTTTT. The segment at 21 to 43 is disordered; it reads TTKSRNESTTTTVEAPQAVPSPP. Residues H177, D178, H181, and E193 each contribute to the Zn(2+) site.

The protein belongs to the COQ4 family. As to quaternary structure, component of a multi-subunit COQ enzyme complex. Zn(2+) serves as cofactor.

Its subcellular location is the mitochondrion inner membrane. It catalyses the reaction a 4-hydroxy-3-methoxy-5-(all-trans-polyprenyl)benzoate + H(+) = a 2-methoxy-6-(all-trans-polyprenyl)phenol + CO2. Its pathway is cofactor biosynthesis; ubiquinone biosynthesis. In terms of biological role, lyase that catalyzes the C1-decarboxylation of 4-hydroxy-3-methoxy-5-(all-trans-polyprenyl)benzoic acid into 2-methoxy-6-(all-trans-polyprenyl)phenol during ubiquinone biosynthesis. This chain is Ubiquinone biosynthesis protein COQ4 homolog 2, mitochondrial, found in Culex quinquefasciatus (Southern house mosquito).